Consider the following 82-residue polypeptide: Neuromacin (82 aa).

Residues 1 to 23 (MALLNKLLCFALVFMIFGEFVTP) form the signal peptide. 4 cysteine pairs are disulfide-bonded: cysteine 25/cysteine 32, cysteine 47/cysteine 51, cysteine 61/cysteine 69, and cysteine 79/cysteine 81.

It belongs to the macin family.

It is found in the secreted. The chain is Neuromacin from Hirudo medicinalis (Medicinal leech).